A 379-amino-acid polypeptide reads, in one-letter code: UDP-N-acetylglucosamine--N-acetylmuramyl-(pentapeptide) pyrophosphoryl-undecaprenol N-acetylglucosamine transferase (379 aa).

Residues 10 to 12, Asn124, Arg161, Ser195, and Gln291 contribute to the UDP-N-acetyl-alpha-D-glucosamine site; that span reads TAG.

It belongs to the glycosyltransferase 28 family. MurG subfamily.

The protein resides in the cell membrane. It carries out the reaction di-trans,octa-cis-undecaprenyl diphospho-N-acetyl-alpha-D-muramoyl-L-alanyl-D-glutamyl-meso-2,6-diaminopimeloyl-D-alanyl-D-alanine + UDP-N-acetyl-alpha-D-glucosamine = di-trans,octa-cis-undecaprenyl diphospho-[N-acetyl-alpha-D-glucosaminyl-(1-&gt;4)]-N-acetyl-alpha-D-muramoyl-L-alanyl-D-glutamyl-meso-2,6-diaminopimeloyl-D-alanyl-D-alanine + UDP + H(+). Its pathway is cell wall biogenesis; peptidoglycan biosynthesis. Functionally, cell wall formation. Catalyzes the transfer of a GlcNAc subunit on undecaprenyl-pyrophosphoryl-MurNAc-pentapeptide (lipid intermediate I) to form undecaprenyl-pyrophosphoryl-MurNAc-(pentapeptide)GlcNAc (lipid intermediate II). In Thermobifida fusca (strain YX), this protein is UDP-N-acetylglucosamine--N-acetylmuramyl-(pentapeptide) pyrophosphoryl-undecaprenol N-acetylglucosamine transferase.